The sequence spans 877 residues: Dynamin (877 aa).

The 267-residue stretch at 23–289 (QLDLPQIAVV…LTNHIRDTLP (267 aa)) folds into the Dynamin-type G domain. The tract at residues 33–40 (GGQSAGKS) is G1 motif. Residue 33–41 (GGQSAGKSS) coordinates GTP. Residues 59-61 (VTR) are G2 motif. The interval 131-134 (DLPG) is G3 motif. The G4 motif stretch occupies residues 200-203 (TKLD). Residues 200–206 (TKLDLMD) and 231–234 (NRSQ) contribute to the GTP site. The segment at 230-233 (VNRS) is G5 motif. The PH domain maps to 513–621 (QVIRKGHMVI…WKASFLRAGV (109 aa)). 2 disordered regions span residues 623–648 (PEKQ…QLER) and 740–834 (TVSS…SGAV). Residues 630 to 641 (ENGDESASEESS) show a composition bias toward acidic residues. The 92-residue stretch at 650–741 (VETIRNLVDS…IIGDVSMATV (92 aa)) folds into the GED domain. 3 positions are modified to phosphoserine: Ser756, Ser764, and Ser767. Residues 788-826 (PPLPPSTGRPAPAIPNRPGGGAPPLPGGRPGGSLPPPML) show a composition bias toward pro residues.

Belongs to the TRAFAC class dynamin-like GTPase superfamily. Dynamin/Fzo/YdjA family.

Its subcellular location is the cytoplasm. The protein localises to the cytoskeleton. It carries out the reaction GTP + H2O = GDP + phosphate + H(+). Its function is as follows. Microtubule-associated force-producing protein which is involved in the production of microtubule bundles and which is able to bind and hydrolyze GTP. Implicated in endocytic protein sorting. The chain is Dynamin (shi) from Drosophila melanogaster (Fruit fly).